Here is a 343-residue protein sequence, read N- to C-terminus: Methionine import ATP-binding protein MetN (343 aa).

The ABC transporter domain occupies 2-241; it reads ITLSHITKQF…PKTPLAQAFI (240 aa). 38–45 contributes to the ATP binding site; sequence GASGAGKS.

This sequence belongs to the ABC transporter superfamily. Methionine importer (TC 3.A.1.24) family. In terms of assembly, the complex is composed of two ATP-binding proteins (MetN), two transmembrane proteins (MetI) and a solute-binding protein (MetQ).

It localises to the cell inner membrane. The catalysed reaction is L-methionine(out) + ATP + H2O = L-methionine(in) + ADP + phosphate + H(+). It carries out the reaction D-methionine(out) + ATP + H2O = D-methionine(in) + ADP + phosphate + H(+). Its function is as follows. Part of the ABC transporter complex MetNIQ involved in methionine import. Responsible for energy coupling to the transport system. The sequence is that of Methionine import ATP-binding protein MetN from Sodalis glossinidius (strain morsitans).